The sequence spans 130 residues: Phosphoribosyl-AMP cyclohydrolase 1 (130 aa).

Asp77 contacts Mg(2+). Cys78 lines the Zn(2+) pocket. Positions 79 and 81 each coordinate Mg(2+). Positions 95 and 102 each coordinate Zn(2+).

The protein belongs to the PRA-CH family. As to quaternary structure, homodimer. It depends on Mg(2+) as a cofactor. Zn(2+) serves as cofactor.

It localises to the cytoplasm. It catalyses the reaction 1-(5-phospho-beta-D-ribosyl)-5'-AMP + H2O = 1-(5-phospho-beta-D-ribosyl)-5-[(5-phospho-beta-D-ribosylamino)methylideneamino]imidazole-4-carboxamide. It participates in amino-acid biosynthesis; L-histidine biosynthesis; L-histidine from 5-phospho-alpha-D-ribose 1-diphosphate: step 3/9. Functionally, catalyzes the hydrolysis of the adenine ring of phosphoribosyl-AMP. The polypeptide is Phosphoribosyl-AMP cyclohydrolase 1 (Pseudomonas fluorescens (strain ATCC BAA-477 / NRRL B-23932 / Pf-5)).